The primary structure comprises 75 residues: Exodeoxyribonuclease 7 small subunit (75 aa).

It belongs to the XseB family. In terms of assembly, heterooligomer composed of large and small subunits.

The protein localises to the cytoplasm. It carries out the reaction Exonucleolytic cleavage in either 5'- to 3'- or 3'- to 5'-direction to yield nucleoside 5'-phosphates.. Functionally, bidirectionally degrades single-stranded DNA into large acid-insoluble oligonucleotides, which are then degraded further into small acid-soluble oligonucleotides. This chain is Exodeoxyribonuclease 7 small subunit, found in Chlamydia felis (strain Fe/C-56) (Chlamydophila felis).